Here is a 78-residue protein sequence, read N- to C-terminus: Putative protein PeaD (78 aa).

Belongs to the phage P protein family.

The sequence is that of Putative protein PeaD (peaD) from Escherichia coli (strain K12).